The chain runs to 253 residues: MEMKQISETTLKITISMDDLEERGMELKDFLIPQEKTEEFFYSVMDELDLPDNFKDSGMLSFRVTPRKDRLDVFVTKSEINKDINLEDLAEFGDMSQMTPEDFFKSLEQSMREKGDVKAHEKLEQIEEIMEDVVEATLANQSEAADPSTNHESEPLDYVHYVLDFSTITEAVAFAKTIDFSIEASELYKGSNCYHMTILLDVQQQPSYFANVMYARLIEHANPGSKTRAYLQEHGLQLMLDGAVEQLQKIELG.

It belongs to the MecA family. In terms of assembly, homodimer.

Enables the recognition and targeting of unfolded and aggregated proteins to the ClpC protease or to other proteins involved in proteolysis. This Streptococcus pyogenes serotype M6 (strain ATCC BAA-946 / MGAS10394) protein is Adapter protein MecA.